A 385-amino-acid chain; its full sequence is Cytochrome b (385 aa).

4 helical membrane passes run 32 to 52, 76 to 98, 113 to 133, and 179 to 199; these read FGSL…TLAM, WLIR…LHIG, AWIL…LGYV, and FFAL…MHLI. The heme b site is built by histidine 82 and histidine 96. 2 residues coordinate heme b: histidine 183 and histidine 197. Residue histidine 202 participates in a ubiquinone binding. 4 helical membrane-spanning segments follow: residues 226-246, 290-310, 322-342, and 349-369; these read YLFK…IFVF, LLGV…PKTD, LSKI…QLGA, and FIEF…IIMP.

This sequence belongs to the cytochrome b family. As to quaternary structure, fungal cytochrome b-c1 complex contains 10 subunits; 3 respiratory subunits, 2 core proteins and 5 low-molecular weight proteins. Cytochrome b-c1 complex is a homodimer. Requires heme b as cofactor.

The protein resides in the mitochondrion inner membrane. Component of the ubiquinol-cytochrome c reductase complex (complex III or cytochrome b-c1 complex) that is part of the mitochondrial respiratory chain. The b-c1 complex mediates electron transfer from ubiquinol to cytochrome c. Contributes to the generation of a proton gradient across the mitochondrial membrane that is then used for ATP synthesis. The chain is Cytochrome b (cob) from Akanthomyces muscarius (Entomopathogenic fungus).